The sequence spans 320 residues: 2-oxoglutarate-dependent dioxygenase thnC (320 aa).

A Fe2OG dioxygenase domain is found at 174-278; sequence PLVQMKLIRY…HSCATFWHGD (105 aa). Residues His199, Asp201, and His258 each contribute to the Fe cation site. Residue Arg268 coordinates 2-oxoglutarate.

Belongs to the iron/ascorbate-dependent oxidoreductase family. Fe(2+) serves as cofactor.

The catalysed reaction is trihazone A + 2-oxoglutarate + O2 + H(+) = trihazone D + succinate + 2 CO2 + H2O. It participates in secondary metabolite biosynthesis. Functionally, 2-oxoglutarate-dependent dioxygenase; part of the gene cluster that produces the tetronate natural products trihazones. ThnC catalyzes the oxidative decarboxylation of trihazone A to trihazone D. The C4 hydrogen is first abstracted by the iron-oxo species generated in ThnC to give a tertiary radical at C4. This is followed by decarboxylation and removal of the second electron by the FeIII-OH center to give trihazone D. The pathway begins with the formation of trihazone A by the hybrid PKS-NRPS synthetase thnA and the trans-enoyl reductase thnE. Trihazone A is further decarboxylated by the 2-oxoglutarate-dependent dioxygenase thnC to produce trihazone D. The function of the FAD-dependent monooxygenase thnD has still to be identified. This Trichoderma harzianum (Hypocrea lixii) protein is 2-oxoglutarate-dependent dioxygenase thnC.